Here is an 87-residue protein sequence, read N- to C-terminus: Small ribosomal subunit protein bS18 (87 aa).

Positions Met1–Arg10 are enriched in basic and acidic residues. The segment at Met1–Ala23 is disordered.

The protein belongs to the bacterial ribosomal protein bS18 family. Part of the 30S ribosomal subunit. Forms a tight heterodimer with protein bS6.

Its function is as follows. Binds as a heterodimer with protein bS6 to the central domain of the 16S rRNA, where it helps stabilize the platform of the 30S subunit. The polypeptide is Small ribosomal subunit protein bS18 (Clavibacter michiganensis subsp. michiganensis (strain NCPPB 382)).